A 98-amino-acid polypeptide reads, in one-letter code: Alpha-elicitin MGM-alpha (98 aa).

3 disulfides stabilise this stretch: C3–C71, C27–C56, and C51–C95.

Belongs to the elicitin family.

It localises to the secreted. Functionally, induces local and distal defense responses (incompatible hypersensitive reaction) in plants from the solanaceae and cruciferae families. Elicits leaf necrosis and causes the accumulation of pathogenesis-related proteins. Might interact with the lipidic molecules of the plasma membrane. The protein is Alpha-elicitin MGM-alpha of Phytophthora megasperma (Potato pink rot fungus).